The primary structure comprises 255 residues: Taurine import ATP-binding protein TauB (255 aa).

Residues 2 to 229 (LQISHLYADY…RFVAGESSRS (228 aa)) enclose the ABC transporter domain. ATP is bound at residue 34 to 41 (GPSGCGKT).

This sequence belongs to the ABC transporter superfamily. Taurine importer (TC 3.A.1.17.1) family. The complex is composed of two ATP-binding proteins (TauB), two transmembrane proteins (TauC) and a solute-binding protein (TauA).

It is found in the cell inner membrane. It carries out the reaction taurine(out) + ATP + H2O = taurine(in) + ADP + phosphate + H(+). Part of the ABC transporter complex TauABC involved in taurine import. Responsible for energy coupling to the transport system. The chain is Taurine import ATP-binding protein TauB from Shigella dysenteriae serotype 1 (strain Sd197).